A 96-amino-acid polypeptide reads, in one-letter code: Large ribosomal subunit protein eL14 (96 aa).

This sequence belongs to the eukaryotic ribosomal protein eL14 family.

In Desulfurococcus amylolyticus (strain DSM 18924 / JCM 16383 / VKM B-2413 / 1221n) (Desulfurococcus kamchatkensis), this protein is Large ribosomal subunit protein eL14.